A 218-amino-acid chain; its full sequence is Thiopurine S-methyltransferase (218 aa).

S-adenosyl-L-methionine-binding residues include Trp10, Leu45, Glu66, and Arg123.

It belongs to the class I-like SAM-binding methyltransferase superfamily. TPMT family.

The protein resides in the cytoplasm. It carries out the reaction S-adenosyl-L-methionine + a thiopurine = S-adenosyl-L-homocysteine + a thiopurine S-methylether.. This chain is Thiopurine S-methyltransferase, found in Xanthomonas euvesicatoria pv. vesicatoria (strain 85-10) (Xanthomonas campestris pv. vesicatoria).